A 65-amino-acid chain; its full sequence is Metallothionein-like protein 3B (65 aa).

It belongs to the metallothionein superfamily. Type 15 family.

Metallothioneins have a high content of cysteine residues that bind various heavy metals. This chain is Metallothionein-like protein 3B (MT3B), found in Oryza sativa subsp. indica (Rice).